The following is a 463-amino-acid chain: ATP-dependent protease ATPase subunit HslU (463 aa).

ATP-binding positions include Ile-19, 61-66 (GVGKTE), Asp-277, Glu-341, and Arg-413.

This sequence belongs to the ClpX chaperone family. HslU subfamily. As to quaternary structure, a double ring-shaped homohexamer of HslV is capped on each side by a ring-shaped HslU homohexamer. The assembly of the HslU/HslV complex is dependent on binding of ATP.

It localises to the cytoplasm. Its function is as follows. ATPase subunit of a proteasome-like degradation complex; this subunit has chaperone activity. The binding of ATP and its subsequent hydrolysis by HslU are essential for unfolding of protein substrates subsequently hydrolyzed by HslV. HslU recognizes the N-terminal part of its protein substrates and unfolds these before they are guided to HslV for hydrolysis. The chain is ATP-dependent protease ATPase subunit HslU from Bacillus cytotoxicus (strain DSM 22905 / CIP 110041 / 391-98 / NVH 391-98).